We begin with the raw amino-acid sequence, 7388 residues long: Microtubule-actin cross-linking factor 1, isoforms 1/2/3/4/5 (7388 aa).

Positions 1–47 are disordered; it reads MSSSDEETLSERSCRSERSCRSERSYRSERSGSLSPCPPGDTLPWNL. The segment at 1 to 295 is actin-binding; it reads MSSSDEETLS…VITYVSSIYD (295 aa). At serine 4 the chain carries Phosphoserine. Positions 9 to 30 are enriched in basic and acidic residues; sequence LSERSCRSERSCRSERSYRSER. Phosphoserine occurs at positions 35 and 57. Calponin-homology (CH) domains lie at 78 to 181 and 194 to 298; these read RVQK…LHFQ and MSAK…DAFP. 2 LRR repeats span residues 148 to 171 and 240 to 264; these read QRQV…LTLG and LVDM…VAER. Serine 280 is modified (phosphoserine). LRR repeat units lie at residues 377 to 399 and 441 to 464; these read LYKL…YHPN and LNCE…LESG. Serine 814 is subject to Phosphoserine. The SH3 domain occupies 868–925; sequence KNTISVKAVCDYRQIEITICKNDECVLEDNSQRTKWKVISPTGNEAMVPSVCFLIPPP. One copy of the LRR 5 repeat lies at 1050-1073; it reads ISELKNIRLRLEEYEQRVVKRIQS. Serine 1122 carries the phosphoserine modification. LRR repeat units lie at residues 1128–1154, 1187–1210, and 1257–1282; these read VPTL…VYLN, LADL…VKDK, and HRVI…DYRA. Phosphoserine occurs at positions 1367 and 1376. 5 Plectin repeats span residues 1577–1621, 1654–1696, 1769–1809, 1811–1848, and 1855–1886; these read LVLL…RELQ, LKIL…VLES, RLLE…CAIL, RQLQ…VILE, and GLLW…KILS. A phosphoserine mark is found at serine 2006 and serine 2051. Residues 2051–2085 form a disordered region; the sequence is SQNKEYPDREDCTTEKGKKTTVETEDSSVENPEQD. Basic and acidic residues predominate over residues 2055–2072; it reads EYPDREDCTTEKGKKTTV. Serine 2077 bears the Phosphoserine mark. 6 Plectin repeats span residues 2290 to 2332, 2367 to 2410, 2411 to 2437, 2501 to 2543, 2581 to 2612, and 2686 to 2730; these read LNVL…KLME, NVLM…LERQ, VVTG…GLVD, RLLT…LKRV, EVQA…LTNE, and LKVL…ASHQ. Disordered stretches follow at residues 3013 to 3034 and 3104 to 3174; these read EHDS…GKEA and SEPF…NECK. The segment covering 3115-3124 has biased composition (basic and acidic residues); the sequence is EGLHYQESDG. Serine 3122 carries the post-translational modification Phosphoserine. The span at 3129–3158 shows a compositional bias: polar residues; sequence TGPSQISKTDKSFQGTTRQETNYQDSWVTS. 2 LRR repeats span residues 3239–3262 and 3264–3283; these read LTGE…SIED and VTQR…LFKG. The span at 3321–3332 shows a compositional bias: basic and acidic residues; that stretch reads EKTPQEKLRESP. Positions 3321–3350 are disordered; it reads EKTPQEKLRESPGSEQTPFMTAPEGKGNGG. Serine 3331 is subject to Phosphoserine. LRR repeat units follow at residues 3646 to 3669 and 3696 to 3720; these read QQDL…IQNR and LTAL…TRVA. Spectrin repeat units lie at residues 3883 to 3957 and 4000 to 4108; these read ELQK…NSFK and QYHQ…SLLQ. Serine 3927 bears the Phosphoserine mark. An LRR 13 repeat occupies 3936 to 3958; it reads KGDLRFVTISGQKVLDMENSFKE. LRR repeat units follow at residues 4125-4150 and 4261-4287; these read LQSI…VIQE and IQEL…ELSS. Residues 4466–4574 form a Spectrin 3 repeat; sequence RMEEVHKEAN…TVARQRQLEE (109 aa). Residues serine 4495, serine 4496, and serine 4521 each carry the phosphoserine modification. 3 LRR repeats span residues 4511–4534, 4601–4624, and 4769–4792; these read KAFL…LAGL, GVLG…QFML, and KKRL…RINR. Spectrin repeat units lie at residues 4800–4904 and 4909–5012; these read TQQF…SRLK and KAQK…SLEE. Phosphoserine is present on residues serine 4836 and serine 4962. LRR repeat units follow at residues 5051-5076, 5172-5194, and 5281-5304; these read NKNL…YLRN, NKIH…MLEE, and KEQV…LIQS. 3 Spectrin repeats span residues 5236–5341, 5348–5450, and 5455–5557; these read EDFY…QLQE, KFQD…QLED, and AKQF…LRTL. A Phosphothreonine modification is found at threonine 5435. The tract at residues 5583-5603 is disordered; it reads EELATSGGQSPTGEQIPQFQQ. Over residues 5588–5603 the composition is skewed to polar residues; that stretch reads SGGQSPTGEQIPQFQQ. 2 LRR repeats span residues 5695 to 5719 and 5804 to 5828; these read MALG…AFSI and AQLP…QLRE. Spectrin repeat units follow at residues 5783 to 5885, 6005 to 6110, 6115 to 6219, 6225 to 6328, 6333 to 6439, 6443 to 6547, 6552 to 6658, 6665 to 6766, and 6771 to 6874; these read NQFW…ALDE, LAEK…KLED, AVQY…HKLE, LGQF…QQLQ, QAQG…KLEE, LATE…RSLD, RAKQ…KLEE, QFMD…RLEQ, and AEVF…QRLE. Residues serine 5808 and serine 6032 each carry the phosphoserine modification. Residue lysine 6210 is modified to N6-acetyllysine. Residues 6496–6519 form an LRR 24 repeat; it reads RDQIIELDQTGNQLKFLSQKQDVV. Residues 6951–6981 are disordered; it reads PTHAPFIEKSRSGGRKSLSQPTPPPMPILSQ. Serine 6967 is modified (phosphoserine). EF-hand domains are found at residues 7041 to 7076 and 7077 to 7112; these read HKKS…SKFP and TTKL…NKDA. Ca(2+)-binding residues include aspartate 7054, aspartate 7056, aspartate 7058, lysine 7060, glutamate 7065, aspartate 7090, aspartate 7092, aspartate 7094, tyrosine 7096, and glutamate 7101. In terms of domain architecture, GAR spans 7117 to 7189; that stretch reads TDADKIEDEV…EFLVKNDPCR (73 aa). The C-terminal tail stretch occupies residues 7117 to 7388; that stretch reads TDADKIEDEV…ASPRTPGPKR (272 aa). The tract at residues 7205–7388 is disordered; the sequence is PEGASQGMTP…ASPRTPGPKR (184 aa). Residues 7225 to 7259 are compositionally biased toward low complexity; sequence SSRAASPTRSSSSASQSNHSCTSMPSSPATPASGT. Threonine 7254 carries the phosphothreonine modification. Positions 7275–7299 are enriched in polar residues; that stretch reads TFHSSRTSLAGDTSNSSSPASTGAK. Phosphoserine occurs at positions 7279 and 7292. Residues 7310–7324 show a composition bias toward low complexity; it reads SRPGSRAGSRAGSRA. Residues 7313–7328 are 4 X 4 AA tandem repeats of [GS]-S-R-[AR]; the sequence is GSRAGSRAGSRASSRR. Residues serine 7330 and serine 7333 each carry the phosphoserine modification. Polar residues predominate over residues 7339–7361; sequence ETQSACSDTSESSAAGGQGNSRR.

Belongs to the plakin or cytolinker family. In terms of assembly, isoform 2: Interacts with MAPRE1, CLASP1, CLASP2, AXIN1 and LRP6. Isoform 2: Found in a complex composed of MACF1, APC, AXIN1, CTNNB1 and GSK3B. Isoform 2: Interacts with GOLGA4. Isoform 2: Interacts with CAMSAP3. In terms of processing, phosphorylated on serine residues in the C-terminal tail by GSK3B. Phosphorylation inhibits microtubule-binding and this plays a critical role in bulge stem cell migration and skin wound repair. Wnt-signaling can repress phosphorylation. In terms of tissue distribution, isoform 2: Ubiquitously expressed. Isoform 1: Expressed in cell lines NCI-H460, A-549 and HaCaT. Isoform 4: Expressed in heart, lung, pituitary and placenta, not found in brain, kidney, liver, pancreas or skeletal muscle.

Its subcellular location is the cytoplasm. It is found in the cytoskeleton. The protein resides in the golgi apparatus. The protein localises to the cell membrane. It localises to the cell projection. Its subcellular location is the ruffle membrane. Functionally, F-actin-binding protein which plays a role in cross-linking actin to other cytoskeletal proteins and also binds to microtubules. Plays an important role in ERBB2-dependent stabilization of microtubules at the cell cortex. Acts as a positive regulator of Wnt receptor signaling pathway and is involved in the translocation of AXIN1 and its associated complex (composed of APC, CTNNB1 and GSK3B) from the cytoplasm to the cell membrane. Has actin-regulated ATPase activity and is essential for controlling focal adhesions (FAs) assembly and dynamics. Interaction with CAMSAP3 at the minus ends of non-centrosomal microtubules tethers microtubules minus-ends to actin filaments, regulating focal adhesion size and cell migration. May play role in delivery of transport vesicles containing GPI-linked proteins from the trans-Golgi network through its interaction with GOLGA4. Plays a key role in wound healing and epidermal cell migration. Required for efficient upward migration of bulge cells in response to wounding and this function is primarily rooted in its ability to coordinate microtubule dynamics and polarize hair follicle stem cells. As a regulator of actin and microtubule arrangement and stabilization, it plays an essential role in neurite outgrowth, branching and spine formation during brain development. The sequence is that of Microtubule-actin cross-linking factor 1, isoforms 1/2/3/4/5 from Homo sapiens (Human).